Reading from the N-terminus, the 559-residue chain is ATP synthase subunit beta-3, mitochondrial (559 aa).

Residues 1 to 28 (MASRRILSSLLRSSSSRSTSKSSLIGSR) are compositionally biased toward low complexity. The tract at residues 1 to 39 (MASRRILSSLLRSSSSRSTSKSSLIGSRNPRLLSPGPAH) is disordered. Residues 1-54 (MASRRILSSLLRSSSSRSTSKSSLIGSRNPRLLSPGPAHGAAPCGTLLGRVAEY) constitute a mitochondrion transit peptide. A Phosphoserine modification is found at Ser-62. 234–241 (GGAGVGKT) contributes to the ATP binding site.

It belongs to the ATPase alpha/beta chains family. As to quaternary structure, F-type ATPases have 2 components, CF(1) - the catalytic core - and CF(0) - the membrane proton channel. CF(1) has five subunits: alpha(3), beta(3), gamma(1), delta(1), epsilon(1). CF(0) has three main subunits: a, b and c.

Its subcellular location is the mitochondrion. The protein resides in the mitochondrion inner membrane. It catalyses the reaction ATP + H2O + 4 H(+)(in) = ADP + phosphate + 5 H(+)(out). Mitochondrial membrane ATP synthase (F(1)F(0) ATP synthase or Complex V) produces ATP from ADP in the presence of a proton gradient across the membrane which is generated by electron transport complexes of the respiratory chain. F-type ATPases consist of two structural domains, F(1) - containing the extramembraneous catalytic core, and F(0) - containing the membrane proton channel, linked together by a central stalk and a peripheral stalk. During catalysis, ATP synthesis in the catalytic domain of F(1) is coupled via a rotary mechanism of the central stalk subunits to proton translocation. Subunits alpha and beta form the catalytic core in F(1). Rotation of the central stalk against the surrounding alpha(3)beta(3) subunits leads to hydrolysis of ATP in three separate catalytic sites on the beta subunits. The polypeptide is ATP synthase subunit beta-3, mitochondrial (Arabidopsis thaliana (Mouse-ear cress)).